Here is a 120-residue protein sequence, read N- to C-terminus: NAD(P)H-quinone oxidoreductase subunit 3 (120 aa).

3 consecutive transmembrane segments (helical) span residues 6-26 (GYDA…LALV), 64-84 (MFAL…PWAV), and 89-109 (LGLL…VALA).

This sequence belongs to the complex I subunit 3 family. In terms of assembly, NDH-1 can be composed of about 15 different subunits; different subcomplexes with different compositions have been identified which probably have different functions.

The protein localises to the cellular thylakoid membrane. The enzyme catalyses a plastoquinone + NADH + (n+1) H(+)(in) = a plastoquinol + NAD(+) + n H(+)(out). It carries out the reaction a plastoquinone + NADPH + (n+1) H(+)(in) = a plastoquinol + NADP(+) + n H(+)(out). Functionally, NDH-1 shuttles electrons from an unknown electron donor, via FMN and iron-sulfur (Fe-S) centers, to quinones in the respiratory and/or the photosynthetic chain. The immediate electron acceptor for the enzyme in this species is believed to be plastoquinone. Couples the redox reaction to proton translocation, and thus conserves the redox energy in a proton gradient. Cyanobacterial NDH-1 also plays a role in inorganic carbon-concentration. In Prochlorococcus marinus (strain MIT 9211), this protein is NAD(P)H-quinone oxidoreductase subunit 3.